Here is a 359-residue protein sequence, read N- to C-terminus: Phosphoserine aminotransferase (359 aa).

R41 serves as a coordination point for L-glutamate. Pyridoxal 5'-phosphate contacts are provided by residues 75 to 76 (AS), W99, T147, D166, and Q189. K190 is modified (N6-(pyridoxal phosphate)lysine). Residue 231-232 (NT) participates in pyridoxal 5'-phosphate binding.

The protein belongs to the class-V pyridoxal-phosphate-dependent aminotransferase family. SerC subfamily. Homodimer. Requires pyridoxal 5'-phosphate as cofactor.

The protein localises to the cytoplasm. The enzyme catalyses O-phospho-L-serine + 2-oxoglutarate = 3-phosphooxypyruvate + L-glutamate. The catalysed reaction is 4-(phosphooxy)-L-threonine + 2-oxoglutarate = (R)-3-hydroxy-2-oxo-4-phosphooxybutanoate + L-glutamate. The protein operates within amino-acid biosynthesis; L-serine biosynthesis; L-serine from 3-phospho-D-glycerate: step 2/3. It participates in cofactor biosynthesis; pyridoxine 5'-phosphate biosynthesis; pyridoxine 5'-phosphate from D-erythrose 4-phosphate: step 3/5. Catalyzes the reversible conversion of 3-phosphohydroxypyruvate to phosphoserine and of 3-hydroxy-2-oxo-4-phosphonooxybutanoate to phosphohydroxythreonine. In Azobacteroides pseudotrichonymphae genomovar. CFP2, this protein is Phosphoserine aminotransferase.